The chain runs to 117 residues: MDLIKIAEEAFATGKQHPSFKAGDTVTVAYRIIEGNKERVQLYRGVVIKIAGHGDKKRFTVRKMSGTVGVERIFPIESPAIDSIEVNKVGKVRRAKLYYLRALTGKKARIKEKRVNN.

Belongs to the bacterial ribosomal protein bL19 family.

Functionally, this protein is located at the 30S-50S ribosomal subunit interface and may play a role in the structure and function of the aminoacyl-tRNA binding site. This is Large ribosomal subunit protein bL19 from Bacteroides thetaiotaomicron (strain ATCC 29148 / DSM 2079 / JCM 5827 / CCUG 10774 / NCTC 10582 / VPI-5482 / E50).